Reading from the N-terminus, the 545-residue chain is Putative transcription factor ecdB (545 aa).

Residues 12–39 (CDACRSRRVKCDGQRPSCMGCLSRGLDC) constitute a DNA-binding region (zn(2)-C6 fungal-type). Residues 79–99 (PPPVLLASARPSSNPLSSHED) form a disordered region.

It localises to the nucleus. This Aspergillus rugulosus (Emericella rugulosa) protein is Putative transcription factor ecdB.